Reading from the N-terminus, the 434-residue chain is UDP-N-acetylglucosamine 1-carboxyvinyltransferase (434 aa).

22–23 is a binding site for phosphoenolpyruvate; sequence KN. R97 provides a ligand contact to UDP-N-acetyl-alpha-D-glucosamine. The active-site Proton donor is D121. Residues D319 and M341 each contribute to the UDP-N-acetyl-alpha-D-glucosamine site.

Belongs to the EPSP synthase family. MurA subfamily.

It localises to the cytoplasm. The enzyme catalyses phosphoenolpyruvate + UDP-N-acetyl-alpha-D-glucosamine = UDP-N-acetyl-3-O-(1-carboxyvinyl)-alpha-D-glucosamine + phosphate. Its pathway is cell wall biogenesis; peptidoglycan biosynthesis. Cell wall formation. Adds enolpyruvyl to UDP-N-acetylglucosamine. In Porphyromonas gingivalis (strain ATCC BAA-308 / W83), this protein is UDP-N-acetylglucosamine 1-carboxyvinyltransferase.